A 64-amino-acid chain; its full sequence is Large ribosomal subunit protein bL33 (64 aa).

Basic and acidic residues-rich tracts occupy residues 16–25 (EARTSSDPKR) and 33–42 (TTEKNRRNTT). The segment at 16–42 (EARTSSDPKRSNGVSRYTTEKNRRNTT) is disordered.

It belongs to the bacterial ribosomal protein bL33 family.

In Prochlorococcus marinus (strain MIT 9301), this protein is Large ribosomal subunit protein bL33.